Reading from the N-terminus, the 432-residue chain is Adenylosuccinate synthetase (432 aa).

Residues 13–19 and 41–43 each bind GTP; these read GDEGKGK and GHT. The active-site Proton acceptor is the Asp14. The Mg(2+) site is built by Asp14 and Gly41. Residues 14 to 17, 39 to 42, Thr130, Arg144, Gln225, Thr240, and Arg304 each bind IMP; these read DEGK and NAGH. Catalysis depends on His42, which acts as the Proton donor. Residue 300-306 coordinates substrate; sequence ATTGRRR. Residues Arg306, 332-334, and 415-417 contribute to the GTP site; these read KLD and STG.

The protein belongs to the adenylosuccinate synthetase family. In terms of assembly, homodimer. The cofactor is Mg(2+).

Its subcellular location is the cytoplasm. It catalyses the reaction IMP + L-aspartate + GTP = N(6)-(1,2-dicarboxyethyl)-AMP + GDP + phosphate + 2 H(+). It participates in purine metabolism; AMP biosynthesis via de novo pathway; AMP from IMP: step 1/2. Plays an important role in the de novo pathway of purine nucleotide biosynthesis. Catalyzes the first committed step in the biosynthesis of AMP from IMP. The sequence is that of Adenylosuccinate synthetase from Salmonella heidelberg (strain SL476).